A 31-amino-acid polypeptide reads, in one-letter code: Phalloidin proprotein (31 aa).

Residues 1-10 (MSDINATRLP) constitute a propeptide that is removed on maturation. A cross-link (cyclopeptide (Ala-Pro)) is located at residues 11–17 (AWLATCP). Residues 12–16 (WLATC) constitute a cross-link (2'-cysteinyl-6'-hydroxytryptophan sulfoxide (Trp-Cys)). Residues 18 to 31 (CAGDDVNPLLTRGE) constitute a propeptide that is removed on maturation.

It belongs to the MSDIN fungal toxin family. Processed by the macrocyclase-peptidase enzyme POPB to yield a toxic cyclic heptapeptide. POPB first removes 10 residues from the N-terminus. Conformational trapping of the remaining peptide forces the enzyme to release this intermediate rather than proceed to macrocyclization. The enzyme rebinds the remaining peptide in a different conformation and catalyzes macrocyclization of the N-terminal 7 residues.

Functionally, major toxin that belongs to the bicyclic heptapeptides called phallotoxins. Although structurally related to amatoxins, phallotoxins have a different mode of action, which is the stabilization of F-actin. Phallotoxins are poisonous when administered parenterally, but not orally because of poor absorption. The sequence is that of Phalloidin proprotein from Amanita ocreata (Western North American destroying angel).